A 525-amino-acid polypeptide reads, in one-letter code: MELTLWTYEGPPHVGAMRVASSMKDIHYVLHAPQGDTYADLLFTMIERRGQRPPVTYTTFQARDLGGDTAELVKRNITEAVERFKPKTLLVGESCTAELIQDQPGALAKGMGFDIPIVNLELPAYSKKENWGASETFYQIIRTLLKDKVNEIDKINPQRWKSLGRRPKVNILGPTLLGFRCRDDVIEIQRILSEQGIDTNVVAPLGSSPEDIERLIDADINVCLYHEIAEISCEWLKRNCGMEYTTTIPIGIKNTINFIHEVHEKLDLPLTNKGELENKSKLPWYSKSVDSNYLTGKRVFIFGDGTHAIAAAKIAKDELGFEVVGLGTYSREMARQVRAAAKDLNIEALITNSYLEVEDAMKKASPELVLGTQMERHSAKRLGIPCSVISTPMHVQDVPARYSPQMGWEGANVIFDDWVHPLMMGLEEHLIDMFKHDFEFVDGHQSHLGHTATNAPDNKETKQAQSNMNIQEKSILWTESGKAELTKVPFFVRGKVKSNTEKYALSKGLPEINDETLYDAKAFFG.

Asp36 provides a ligand contact to [4Fe-4S] cluster. The Proton donor role is filled by Asp290. Substrate is bound at residue Gly425–Leu426.

This sequence belongs to the ChlB/BchB/BchZ family. In terms of assembly, protochlorophyllide reductase is composed of three subunits; ChlL, ChlN and ChlB. Forms a heterotetramer of two ChlB and two ChlN subunits. [4Fe-4S] cluster serves as cofactor.

The enzyme catalyses chlorophyllide a + oxidized 2[4Fe-4S]-[ferredoxin] + 2 ADP + 2 phosphate = protochlorophyllide a + reduced 2[4Fe-4S]-[ferredoxin] + 2 ATP + 2 H2O. It participates in porphyrin-containing compound metabolism; chlorophyll biosynthesis (light-independent). Component of the dark-operative protochlorophyllide reductase (DPOR) that uses Mg-ATP and reduced ferredoxin to reduce ring D of protochlorophyllide (Pchlide) to form chlorophyllide a (Chlide). This reaction is light-independent. The NB-protein (ChlN-ChlB) is the catalytic component of the complex. In Prochlorococcus marinus (strain MIT 9312), this protein is Light-independent protochlorophyllide reductase subunit B.